We begin with the raw amino-acid sequence, 451 residues long: Adenylyltransferase and sulfurtransferase MOCS3 (451 aa).

Threonine 60 carries the post-translational modification Phosphothreonine. ATP is bound by residues glycine 99, aspartate 120, 127–131, lysine 144, and 188–189; these read SNFHR and DN. Positions 229 and 232 each coordinate Zn(2+). The active-site Glycyl thioester intermediate; for adenylyltransferase activity is cysteine 246. The Zn(2+) site is built by cysteine 304 and cysteine 307. The region spanning 353 to 449 is the Rhodanese domain; the sequence is QQQPHLLIDV…WTHKVDPSFP (97 aa). The Cysteine persulfide intermediate; for sulfurtransferase activity role is filled by cysteine 408.

The protein in the N-terminal section; belongs to the HesA/MoeB/ThiF family. UBA4 subfamily. The cofactor is Zn(2+).

It localises to the cytoplasm. Its subcellular location is the cytosol. It catalyses the reaction [molybdopterin-synthase sulfur-carrier protein]-C-terminal Gly-Gly + ATP + H(+) = [molybdopterin-synthase sulfur-carrier protein]-C-terminal Gly-Gly-AMP + diphosphate. It carries out the reaction [molybdopterin-synthase sulfur-carrier protein]-C-terminal Gly-Gly-AMP + S-sulfanyl-L-cysteinyl-[cysteine desulfurase] + AH2 = [molybdopterin-synthase sulfur-carrier protein]-C-terminal-Gly-aminoethanethioate + L-cysteinyl-[cysteine desulfurase] + A + AMP + 2 H(+). The protein operates within tRNA modification; 5-methoxycarbonylmethyl-2-thiouridine-tRNA biosynthesis. It functions in the pathway cofactor biosynthesis; molybdopterin biosynthesis. In terms of biological role, plays a central role in 2-thiolation of mcm(5)S(2)U at tRNA wobble positions of cytosolic tRNA(Lys), tRNA(Glu) and tRNA(Gln). Also essential during biosynthesis of the molybdenum cofactor. Acts by mediating the C-terminal thiocarboxylation of sulfur carriers URM1 and MOCS2A. Its N-terminus first activates URM1 and MOCS2A as acyl-adenylates (-COAMP), then the persulfide sulfur on the catalytic cysteine is transferred to URM1 and MOCS2A to form thiocarboxylation (-COSH) of their C-terminus. The reaction probably involves hydrogen sulfide that is generated from the persulfide intermediate and that acts as a nucleophile towards URM1 and MOCS2A. Subsequently, a transient disulfide bond is formed. Does not use thiosulfate as sulfur donor; NFS1 probably acting as a sulfur donor for thiocarboxylation reactions. This Drosophila ananassae (Fruit fly) protein is Adenylyltransferase and sulfurtransferase MOCS3.